Consider the following 545-residue polypeptide: Chaperonin GroEL 1 (545 aa).

ATP-binding positions include 30-33 (TLGP), Lys51, 87-91 (DGTTT), Gly415, and Asp495.

It belongs to the chaperonin (HSP60) family. In terms of assembly, forms a cylinder of 14 subunits composed of two heptameric rings stacked back-to-back. Interacts with the co-chaperonin GroES.

The protein localises to the cytoplasm. It catalyses the reaction ATP + H2O + a folded polypeptide = ADP + phosphate + an unfolded polypeptide.. Functionally, together with its co-chaperonin GroES, plays an essential role in assisting protein folding. The GroEL-GroES system forms a nano-cage that allows encapsulation of the non-native substrate proteins and provides a physical environment optimized to promote and accelerate protein folding. This Rhizobium meliloti (strain 1021) (Ensifer meliloti) protein is Chaperonin GroEL 1.